The chain runs to 217 residues: Probable transaldolase (217 aa).

K83 functions as the Schiff-base intermediate with substrate in the catalytic mechanism.

This sequence belongs to the transaldolase family. Type 3B subfamily.

Its subcellular location is the cytoplasm. It catalyses the reaction D-sedoheptulose 7-phosphate + D-glyceraldehyde 3-phosphate = D-erythrose 4-phosphate + beta-D-fructose 6-phosphate. Its pathway is carbohydrate degradation; pentose phosphate pathway; D-glyceraldehyde 3-phosphate and beta-D-fructose 6-phosphate from D-ribose 5-phosphate and D-xylulose 5-phosphate (non-oxidative stage): step 2/3. In terms of biological role, transaldolase is important for the balance of metabolites in the pentose-phosphate pathway. In Bartonella quintana (strain Toulouse) (Rochalimaea quintana), this protein is Probable transaldolase.